Here is a 378-residue protein sequence, read N- to C-terminus: Ribosomal RNA large subunit methyltransferase G (378 aa).

This sequence belongs to the methyltransferase superfamily. RlmG family.

Its subcellular location is the cytoplasm. The catalysed reaction is guanosine(1835) in 23S rRNA + S-adenosyl-L-methionine = N(2)-methylguanosine(1835) in 23S rRNA + S-adenosyl-L-homocysteine + H(+). Its function is as follows. Specifically methylates the guanine in position 1835 (m2G1835) of 23S rRNA. This Salmonella paratyphi A (strain ATCC 9150 / SARB42) protein is Ribosomal RNA large subunit methyltransferase G.